The following is a 200-amino-acid chain: Elongation factor Ts (200 aa).

The involved in Mg(2+) ion dislocation from EF-Tu stretch occupies residues 80–83; that stretch reads TDFV.

Belongs to the EF-Ts family.

It localises to the cytoplasm. Its function is as follows. Associates with the EF-Tu.GDP complex and induces the exchange of GDP to GTP. It remains bound to the aminoacyl-tRNA.EF-Tu.GTP complex up to the GTP hydrolysis stage on the ribosome. In Caldanaerobacter subterraneus subsp. tengcongensis (strain DSM 15242 / JCM 11007 / NBRC 100824 / MB4) (Thermoanaerobacter tengcongensis), this protein is Elongation factor Ts.